Reading from the N-terminus, the 955-residue chain is Villin-5 (955 aa).

Gelsolin-like repeat units follow at residues 29–111, 152–218, 274–339, and 644–712; these read FKPV…DKFL, VHVK…VEDG, LLHE…TVMF, and HFTQ…GSEP. 2 disordered regions span residues 741-783 and 801-895; these read KGGG…RVRV and NSRN…GLPV. The span at 756 to 776 shows a compositional bias: polar residues; it reads PTYSGRSTVQDKSQRSRSMSF. Residues 817–836 are compositionally biased toward low complexity; it reads PKSATPDSSSAPSKSSATAS. A compositionally biased stretch (basic and acidic residues) spans 842-864; sequence DRPKSVKDGSELEKPKQEEDAKE. Over residues 867–878 the composition is skewed to polar residues; that stretch reads NTMTSRVESLTI. One can recognise an HP domain in the interval 890 to 955; the sequence is DEGLPVYPYD…NRMKIALQLF (66 aa).

This sequence belongs to the villin/gelsolin family.

It localises to the cytoplasm. It is found in the cytoskeleton. In terms of biological role, ca(2+)-regulated actin-binding protein. Binds actin microfilaments (MFs). Involved in actin filament bundling, severing and capping. Caps the barbed end of actin filaments and is able to sever them in a calcium-dependent manner. This chain is Villin-5, found in Oryza sativa subsp. japonica (Rice).